A 315-amino-acid polypeptide reads, in one-letter code: Taste receptor type 2 member 129 (315 aa).

The Extracellular segment spans residues 1-9 (MDGIIQIIS). Residues 10–30 (AFIVIIEIIIGWFGNGFIVLV) form a helical membrane-spanning segment. Residues 31-46 (NCMHWIKRRRISTVNQ) are Cytoplasmic-facing. A helical membrane pass occupies residues 47-67 (ILTALAFSRIYLLLTVFTVIL). The Extracellular segment spans residues 68–101 (ASVQYSNILVTRREVKVIIFHLITSNHFSMWLAA). A helical membrane pass occupies residues 102–122 (CLGLFYFLKIANFSNFIFVFL). Residues 123–128 (KKRVNK) are Cytoplasmic-facing. Residues 129 to 149 (VVSGTLLMSLVFLFLNTLLIN) form a helical membrane-spanning segment. Topologically, residues 150 to 185 (SYIDAQIDDYRGYLLYDFTSNITVSFYRVILVINNC) are extracellular. A glycan (N-linked (GlcNAc...) asparagine) is linked at asparagine 170. A helical membrane pass occupies residues 186 to 206 (IFTSIPFALSQSTFLMLIFSL). The Cytoplasmic portion of the chain corresponds to 207–233 (WRHYKKMQQHAQRCRDTLTNAHIKVLQ). A helical transmembrane segment spans residues 234-254 (TMIMYVLLSAIFFLFLSMQIW). At 255-266 (RNKLMENILFIR) the chain is on the extracellular side. Residues 267-287 (FCETVAAVFPSGHSCVLIWGD) traverse the membrane as a helical segment. The Cytoplasmic segment spans residues 288 to 315 (TNLRQTFLSVLWWLKHRFTLWVPKLYCR).

Belongs to the G-protein coupled receptor T2R family.

The protein localises to the membrane. Functionally, putative taste receptor which may play a role in the perception of bitterness. This chain is Taste receptor type 2 member 129, found in Rattus norvegicus (Rat).